A 135-amino-acid polypeptide reads, in one-letter code: Galectin-1 (135 aa).

N-acetylalanine is present on Ala-2. Residues 4–135 enclose the Galectin domain; sequence GLVASNLNLK…DFKIKCVAFE (132 aa). Lys-13, Lys-19, and Lys-29 each carry N6-acetyllysine. A Phosphoserine modification is found at Ser-30. A beta-D-galactoside is bound by residues 45-49, His-53, Asn-62, and 69-72; these read HFNPR and WGTE. Residue Lys-108 is modified to N6-acetyllysine; alternate. Lys-108 carries the N6-succinyllysine; alternate modification. Lys-128 carries the N6-acetyllysine modification.

Homodimer. Binds LGALS3BP. Interacts with CD2, CD3, CD4, CD6, CD7, CD43, ALCAM and CD45. Interacts with laminin (via poly-N-acetyllactosamine). Interacts with SUSD2. Interacts with cargo receptor TMED10; the interaction mediates the translocation from the cytoplasm into the ERGIC (endoplasmic reticulum-Golgi intermediate compartment) and thereby secretion. Interacts with CD69.

Its subcellular location is the secreted. The protein localises to the extracellular space. The protein resides in the extracellular matrix. It is found in the cytoplasm. In terms of biological role, lectin that binds beta-galactoside and a wide array of complex carbohydrates. Plays a role in regulating apoptosis, cell proliferation and cell differentiation. Inhibits CD45 protein phosphatase activity and therefore the dephosphorylation of Lyn kinase. Strong inducer of T-cell apoptosis. Plays a negative role in Th17 cell differentiation via activation of the receptor CD69. This Rattus norvegicus (Rat) protein is Galectin-1 (Lgals1).